A 393-amino-acid chain; its full sequence is Ubiquitin-like modifier-activating enzyme 5 (393 aa).

ATP is bound by residues Gly-75, Asp-96, Lys-119, Asn-142, and Asn-175. Cys-217 and Cys-220 together coordinate Zn(2+). Cys-241 functions as the Glycyl thioester intermediate in the catalytic mechanism. Zn(2+) contacts are provided by Cys-294 and Cys-299.

This sequence belongs to the ubiquitin-activating E1 family. UBA5 subfamily.

In terms of biological role, E1-like enzyme which activates UFM1. The polypeptide is Ubiquitin-like modifier-activating enzyme 5 (Bombyx mori (Silk moth)).